The sequence spans 157 residues: Ribonuclease H (157 aa).

Residues 5-146 (IMKQVEIFTD…CDDLARTAAE (142 aa)) enclose the RNase H type-1 domain. 4 residues coordinate Mg(2+): Asp-14, Glu-52, Asp-74, and Asp-138.

This sequence belongs to the RNase H family. As to quaternary structure, monomer. Mg(2+) is required as a cofactor.

The protein localises to the cytoplasm. The catalysed reaction is Endonucleolytic cleavage to 5'-phosphomonoester.. Its function is as follows. Endonuclease that specifically degrades the RNA of RNA-DNA hybrids. The polypeptide is Ribonuclease H (Aliivibrio salmonicida (strain LFI1238) (Vibrio salmonicida (strain LFI1238))).